The primary structure comprises 208 residues: Methylthioribulose-1-phosphate dehydratase (208 aa).

Zn(2+)-binding residues include His-98 and His-100.

This sequence belongs to the aldolase class II family. MtnB subfamily. The cofactor is Zn(2+).

The enzyme catalyses 5-(methylsulfanyl)-D-ribulose 1-phosphate = 5-methylsulfanyl-2,3-dioxopentyl phosphate + H2O. The protein operates within amino-acid biosynthesis; L-methionine biosynthesis via salvage pathway; L-methionine from S-methyl-5-thio-alpha-D-ribose 1-phosphate: step 2/6. Its function is as follows. Catalyzes the dehydration of methylthioribulose-1-phosphate (MTRu-1-P) into 2,3-diketo-5-methylthiopentyl-1-phosphate (DK-MTP-1-P). This chain is Methylthioribulose-1-phosphate dehydratase, found in Hahella chejuensis (strain KCTC 2396).